The sequence spans 282 residues: Thiazole synthase (282 aa).

Catalysis depends on K113, which acts as the Schiff-base intermediate with DXP. Residues G174, 201–202, and 223–224 contribute to the 1-deoxy-D-xylulose 5-phosphate site; these read AG and NT.

Belongs to the ThiG family. Homotetramer. Forms heterodimers with either ThiH or ThiS.

Its subcellular location is the cytoplasm. It carries out the reaction [ThiS sulfur-carrier protein]-C-terminal-Gly-aminoethanethioate + 2-iminoacetate + 1-deoxy-D-xylulose 5-phosphate = [ThiS sulfur-carrier protein]-C-terminal Gly-Gly + 2-[(2R,5Z)-2-carboxy-4-methylthiazol-5(2H)-ylidene]ethyl phosphate + 2 H2O + H(+). The protein operates within cofactor biosynthesis; thiamine diphosphate biosynthesis. Catalyzes the rearrangement of 1-deoxy-D-xylulose 5-phosphate (DXP) to produce the thiazole phosphate moiety of thiamine. Sulfur is provided by the thiocarboxylate moiety of the carrier protein ThiS. In vitro, sulfur can be provided by H(2)S. This chain is Thiazole synthase, found in Cupriavidus metallidurans (strain ATCC 43123 / DSM 2839 / NBRC 102507 / CH34) (Ralstonia metallidurans).